The sequence spans 211 residues: MISYYFQGFALGAAMILPLGPQNAFVMNQGIRRQYHLMIALLCALSDLVLISAGIFGGSALLMQSPWLLALVTWGGVAFLLWYGFGALKTAMSSNLELASAEVMKQGRWKIIATMLAVTWLNPHVYLDTFVVLGSLGGQLAMEPKRWFALGTISASFLWFFGLALLAAWLAPRLRTVKAQRIINILVGVVMWLIAFQLAREGVAHMHALFN.

6 helical membrane-spanning segments follow: residues 1–21, 37–57, 68–88, 111–131, 147–167, and 179–199; these read MISYYFQGFALGAAMILPLGP, LMIALLCALSDLVLISAGIFG, LLALVTWGGVAFLLWYGFGAL, IIATMLAVTWLNPHVYLDTFV, WFALGTISASFLWFFGLALLA, and AQRIINILVGVVMWLIAFQLA.

It belongs to the LysE/ArgO transporter (TC 2.A.75) family.

It localises to the cell inner membrane. The enzyme catalyses L-arginine(in) = L-arginine(out). In terms of biological role, involved in the export of arginine. Important to control the intracellular level of arginine and the correct balance between arginine and lysine. The chain is Arginine exporter protein ArgO from Salmonella paratyphi C (strain RKS4594).